The primary structure comprises 404 residues: Glycosyltransferase GlyB (404 aa).

The interval 1–267 (MNTKSIVFNA…ILLRKDIISR (267 aa)) is GT8 domain. UDP contacts are provided by residues 9–14 (NADNDY) and 103–104 (DS). Mn(2+) is bound by residues D103, D105, and H228. A UDP-binding site is contributed by 228 to 233 (HYTGVK).

In the N-terminal section; belongs to the glycosyltransferase 8 family.

In terms of biological role, may be involved in the polymorphic O-glycosylation of the serine-rich repeat protein PsrP. Has equal hydrolytic activity against both UDP-galactose and UDP-glucose; no glycosyltransferase activity has been seen with tested substrates. This Streptococcus pneumoniae serotype 4 (strain ATCC BAA-334 / TIGR4) protein is Glycosyltransferase GlyB.